The primary structure comprises 75 residues: Putative DNA-directed RNA polymerase subunit omega (75 aa).

This sequence belongs to the RNA polymerase subunit omega family.

It is found in the plastid. Its subcellular location is the chloroplast. It catalyses the reaction RNA(n) + a ribonucleoside 5'-triphosphate = RNA(n+1) + diphosphate. Its function is as follows. May be involved in RNA polymerase activity. The protein is Putative DNA-directed RNA polymerase subunit omega (rpoZ) of Mesostigma viride (Green alga).